A 312-amino-acid chain; its full sequence is Acetylglutamate kinase (312 aa).

Residues 69 to 70 (GG), Arg-91, and Asn-191 each bind substrate.

The protein belongs to the acetylglutamate kinase family. ArgB subfamily.

The protein resides in the cytoplasm. It carries out the reaction N-acetyl-L-glutamate + ATP = N-acetyl-L-glutamyl 5-phosphate + ADP. It participates in amino-acid biosynthesis; L-arginine biosynthesis; N(2)-acetyl-L-ornithine from L-glutamate: step 2/4. Functionally, catalyzes the ATP-dependent phosphorylation of N-acetyl-L-glutamate. This chain is Acetylglutamate kinase, found in Streptomyces griseus subsp. griseus (strain JCM 4626 / CBS 651.72 / NBRC 13350 / KCC S-0626 / ISP 5235).